Here is a 200-residue protein sequence, read N- to C-terminus: MCAARMAAAAQSVYSFSAHPLAGGEPVNLGSLRGKVLLIENVASLUGTTVRDYTQMNELQERLGPRALVVLGFPCNQFGHQENAKNEEILNSLKYVRPGGGFEPNFMLFQKCEVNGAKASPLFAFLREALPPPSDDPTALMTDPKFITWCPVCRNDVSWSFEKFLVGPDGVPVRRYSRRFPTIDIEPDIQALLSKGSGGA.

Position 31 is a phosphoserine (S31). U46 is an active-site residue. Position 46 (U46) is a non-standard amino acid, selenocysteine. N6-acetyllysine; alternate is present on residues K85 and K111. K85 and K111 each carry N6-succinyllysine; alternate. K118 bears the N6-acetyllysine mark. At K145 the chain carries N6-acetyllysine; alternate. K145 is modified (N6-succinyllysine; alternate). S194 is subject to Phosphoserine.

It belongs to the glutathione peroxidase family. In terms of assembly, homotetramer. Interacts with MIEN1. In terms of processing, during periods of oxidative stress, Sec-46 may react with a superoxide radical, irreversibly lose hydroselenide and be converted to dehydroalanine.

It localises to the cytoplasm. Its subcellular location is the mitochondrion. It catalyses the reaction 2 glutathione + H2O2 = glutathione disulfide + 2 H2O. The enzyme catalyses a hydroperoxy polyunsaturated fatty acid + 2 glutathione = a hydroxy polyunsaturated fatty acid + glutathione disulfide + H2O. It carries out the reaction tert-butyl hydroperoxide + 2 glutathione = tert-butanol + glutathione disulfide + H2O. The catalysed reaction is cumene hydroperoxide + 2 glutathione = 2-phenylpropan-2-ol + glutathione disulfide + H2O. It catalyses the reaction (13S)-hydroperoxy-(9Z,11E)-octadecadienoate + 2 glutathione = (13S)-hydroxy-(9Z,11E)-octadecadienoate + glutathione disulfide + H2O. The enzyme catalyses (9S)-hydroperoxy-(10E,12Z)-octadecadienoate + 2 glutathione = (9S)-hydroxy-(10E,12Z)-octadecadienoate + glutathione disulfide + H2O. It carries out the reaction (5S)-hydroperoxy-(6E,8Z,11Z,14Z)-eicosatetraenoate + 2 glutathione = (5S)-hydroxy-(6E,8Z,11Z,14Z)-eicosatetraenoate + glutathione disulfide + H2O. The catalysed reaction is (12S)-hydroperoxy-(5Z,8Z,10E,14Z)-eicosatetraenoate + 2 glutathione = (12S)-hydroxy-(5Z,8Z,10E,14Z)-eicosatetraenoate + glutathione disulfide + H2O. It catalyses the reaction (12R)-hydroperoxy-(5Z,8Z,10E,14Z)-eicosatetraenoate + 2 glutathione = (12R)-hydroxy-(5Z,8Z,10E,14Z)-eicosatetraenoate + glutathione disulfide + H2O. The enzyme catalyses (15S)-hydroperoxy-(5Z,8Z,11Z,13E)-eicosatetraenoate + 2 glutathione = (15S)-hydroxy-(5Z,8Z,11Z,13E)-eicosatetraenoate + glutathione disulfide + H2O. It carries out the reaction (5S)-hydroperoxy-(6E,8Z,11Z,14Z,17Z)-eicosapentaenoate + 2 glutathione = (5S)-hydroxy-(6E,8Z,11Z,14Z,17Z)-eicosapentaenoate + glutathione disulfide + H2O. The catalysed reaction is (12S)-hydroperoxy-(5Z,8Z,10E,14Z,17Z)-eicosapentaenoate + 2 glutathione = (12S)-hydroxy-(5Z,8Z,10E,14Z,17Z)-eicosapentaenoate + glutathione disulfide + H2O. It catalyses the reaction (15S)-hydroperoxy-(5Z,8Z,11Z,13E,17Z)-eicosapentaenoate + 2 glutathione = (15S)-hydroxy-(5Z,8Z,11Z,13E,17Z)-eicosapentaenoate + glutathione disulfide + H2O. The enzyme catalyses (15S)-hydroperoxy-(11Z,13E)-eicosadienoate + 2 glutathione = (15S)-hydroxy-(11Z,13E)-eicosadienoate + glutathione disulfide + H2O. It carries out the reaction (17S)-hydroperoxy-(4Z,7Z,10Z,13Z,15E,19Z)-docosahexaenoate + 2 glutathione = (17S)-hydroxy-(4Z,7Z,10Z,13Z,15E,19Z)-docosahexaenoate + glutathione disulfide + H2O. Its function is as follows. Catalyzes the reduction of hydroperoxides in a glutathione-dependent manner thus regulating cellular redox homeostasis. Can reduce small soluble hydroperoxides such as H2O2, cumene hydroperoxide and tert-butyl hydroperoxide, as well as several fatty acid-derived hydroperoxides. In platelets catalyzes the reduction of 12-hydroperoxyeicosatetraenoic acid, the primary product of the arachidonate 12-lipoxygenase pathway. In Oryctolagus cuniculus (Rabbit), this protein is Glutathione peroxidase 1 (GPX1).